A 464-amino-acid chain; its full sequence is Methylenetetrahydrofolate--tRNA-(uracil-5-)-methyltransferase TrmFO (464 aa).

An FAD-binding site is contributed by 13–18 (GGGLAG).

Belongs to the MnmG family. TrmFO subfamily. FAD is required as a cofactor.

It localises to the cytoplasm. It carries out the reaction uridine(54) in tRNA + (6R)-5,10-methylene-5,6,7,8-tetrahydrofolate + NADH + H(+) = 5-methyluridine(54) in tRNA + (6S)-5,6,7,8-tetrahydrofolate + NAD(+). It catalyses the reaction uridine(54) in tRNA + (6R)-5,10-methylene-5,6,7,8-tetrahydrofolate + NADPH + H(+) = 5-methyluridine(54) in tRNA + (6S)-5,6,7,8-tetrahydrofolate + NADP(+). Its function is as follows. Catalyzes the folate-dependent formation of 5-methyl-uridine at position 54 (M-5-U54) in all tRNAs. This Bartonella bacilliformis (strain ATCC 35685 / KC583 / Herrer 020/F12,63) protein is Methylenetetrahydrofolate--tRNA-(uracil-5-)-methyltransferase TrmFO.